The sequence spans 863 residues: Adenosylcobalamin biosynthesis bifunctional protein CobDQ (863 aa).

The tract at residues 1 to 373 (MNLPEHGGNL…LKSRKKTPSI (373 aa)) is putative threonine-phosphate decarboxylase. O-phospho-L-threonine is bound by residues 6–7 (HG), asparagine 30, and asparagine 159. Position 214 is an N6-(pyridoxal phosphate)lysine (lysine 214). O-phospho-L-threonine is bound by residues arginine 323 and arginine 337. Residues 374–863 (MFQGTASNVG…NLIYRKLGLG (490 aa)) are cobyric acid synthase. In terms of domain architecture, GATase cobBQ-type spans 622–810 (RLDVVLIDIP…IHGIFDKDEF (189 aa)). Residue cysteine 704 is the Nucleophile of the active site. Histidine 802 is an active-site residue.

In the N-terminal section; belongs to the class-II pyridoxal-phosphate-dependent aminotransferase family. This sequence in the C-terminal section; belongs to the CobB/CobQ family. CobQ subfamily. Pyridoxal 5'-phosphate serves as cofactor.

It catalyses the reaction O-phospho-L-threonine + H(+) = (R)-1-aminopropan-2-yl phosphate + CO2. The protein operates within cofactor biosynthesis; adenosylcobalamin biosynthesis. Catalyzes two activities which are involved in the adenosylcobalamin biosynthesis: decarboxylates L-threonine-O-3-phosphate to yield (R)-1-amino-2-propanol O-2-phosphate, the precursor for the linkage between the nucleotide loop and the corrin ring in cobalamin, and catalyzes amidations at positions B, D, E, and G on adenosylcobyrinic A,C-diamide. NH(2) groups are provided by glutamine, and one molecule of ATP is hydrogenolyzed for each amidation. This Leptospira interrogans serogroup Icterohaemorrhagiae serovar Lai (strain 56601) protein is Adenosylcobalamin biosynthesis bifunctional protein CobDQ (cobDQ).